The primary structure comprises 369 residues: Aminomethyltransferase (369 aa).

The protein belongs to the GcvT family. In terms of assembly, the glycine cleavage system is composed of four proteins: P, T, L and H.

The enzyme catalyses N(6)-[(R)-S(8)-aminomethyldihydrolipoyl]-L-lysyl-[protein] + (6S)-5,6,7,8-tetrahydrofolate = N(6)-[(R)-dihydrolipoyl]-L-lysyl-[protein] + (6R)-5,10-methylene-5,6,7,8-tetrahydrofolate + NH4(+). Its function is as follows. The glycine cleavage system catalyzes the degradation of glycine. The chain is Aminomethyltransferase from Synechococcus sp. (strain WH7803).